Here is a 365-residue protein sequence, read N- to C-terminus: DNA replication and repair protein RecF (365 aa).

Residue 30–37 (GDNAQGKT) coordinates ATP.

This sequence belongs to the RecF family.

The protein resides in the cytoplasm. Functionally, the RecF protein is involved in DNA metabolism; it is required for DNA replication and normal SOS inducibility. RecF binds preferentially to single-stranded, linear DNA. It also seems to bind ATP. The protein is DNA replication and repair protein RecF of Alkaliphilus oremlandii (strain OhILAs) (Clostridium oremlandii (strain OhILAs)).